A 781-amino-acid polypeptide reads, in one-letter code: Envelope glycoprotein (781 aa).

The Extracellular segment spans residues 1–597; sequence MMEEGRKEEP…SFTWGSWVDK (597 aa). Residues Asn-189, Asn-212, Asn-241, Asn-266, Asn-285, Asn-301, Asn-309, and Asn-382 are each glycosylated (N-linked (GlcNAc...) asparagine; by host). Residues 423–443 form a fusion peptide region; that stretch reads AVGMVIFLLVLAIMAMTASVT. Asn-464 carries an N-linked (GlcNAc...) asparagine; by host glycan. Residues 482–498 form an immunosuppression region; that stretch reads LNTRVNNLHHRVTYLEF. N-linked (GlcNAc...) asparagine; by host glycosylation is found at Asn-530, Asn-535, and Asn-559. The helical transmembrane segment at 598-618 threads the bilayer; that stretch reads LVWLAYILLAYFAFKVLQCIM. Topologically, residues 619-781 are cytoplasmic; the sequence is SNLGAQTRYQ…PEEGIRPVEM (163 aa). Residues 634–644 show a composition bias toward acidic residues; sequence EDTDPAGDGDQ. The disordered stretch occupies residues 634–666; it reads EDTDPAGDGDQPDDHRSGDTPRSGVPSGGWSQK.

In terms of assembly, the mature envelope protein (Env) consists of a trimer of SU-TM heterodimers attached by non-covalent interactions or by a labile interchain disulfide bond. In terms of processing, specific enzymatic cleavages in vivo yield mature proteins. Envelope glycoproteins are synthesized as an inactive precursor that is N-glycosylated and processed likely by host cell furin or by a furin-like protease in the Golgi to yield the mature SU and TM proteins. The cleavage site between SU and TM requires the minimal sequence [KR]-X-[KR]-R.

The protein resides in the virion membrane. It localises to the host cell membrane. The surface protein (SU) attaches the virus to the host cell by binding to its receptor. This interaction triggers the refolding of the transmembrane protein (TM) and is thought to activate its fusogenic potential by unmasking its fusion peptide. Fusion occurs at the host cell plasma membrane. Its function is as follows. The transmembrane protein (TM) acts as a class I viral fusion protein. Under the current model, the protein has at least 3 conformational states: pre-fusion native state, pre-hairpin intermediate state, and post-fusion hairpin state. During viral and target cell membrane fusion, the coiled coil regions (heptad repeats) assume a trimer-of-hairpins structure, positioning the fusion peptide in close proximity to the C-terminal region of the ectodomain. The formation of this structure appears to drive apposition and subsequent fusion of viral and target cell membranes. Membranes fusion leads to delivery of the nucleocapsid into the cytoplasm. The chain is Envelope glycoprotein (env) from Bos javanicus (Wild banteng).